The primary structure comprises 312 residues: MDIIFYHPTFDTQWWIEVLRKAIPQARVRAWKSGDNDSADYALVWHPPVEMLAGRDLKAVFALGAGVDSILSKLQAHPEMLKPSVPLFRLEDTGMGEQMQEYAVSQVLHWFRRFDDYRIQQNSSHWQPLPEYHREDFTIGILGAGVLGSKVAQSLQTWRFPLRCWSRTRKSWPGVQSFAGREELSAFLSQCRVLINLLPNTPATVGIINQQLLEKLPDGAYLLNLARGVHVVEDDLLAALDSGKVKGAMLDVFNREPLPPESPLWQHPRVTITPHVAAITCPAEAVDYISRTIAQLEKGERVCGQVDRARGY.

Arginine 227 is an active-site residue. The active-site Proton donor is the histidine 275.

It belongs to the D-isomer specific 2-hydroxyacid dehydrogenase family. GhrA subfamily.

It localises to the cytoplasm. It carries out the reaction glycolate + NADP(+) = glyoxylate + NADPH + H(+). It catalyses the reaction (R)-glycerate + NAD(+) = 3-hydroxypyruvate + NADH + H(+). The enzyme catalyses (R)-glycerate + NADP(+) = 3-hydroxypyruvate + NADPH + H(+). In terms of biological role, catalyzes the NADPH-dependent reduction of glyoxylate and hydroxypyruvate into glycolate and glycerate, respectively. This chain is Glyoxylate/hydroxypyruvate reductase A, found in Escherichia coli O7:K1 (strain IAI39 / ExPEC).